A 739-amino-acid polypeptide reads, in one-letter code: NAD(P)H-quinone oxidoreductase subunit 5, chloroplastic (739 aa).

Transmembrane regions (helical) follow at residues 9–29 (LIIPFALLPVPMLIGVALIFF), 40–60 (WAFPSVLLLSIVMIFSFNLSI), 89–109 (IDSLTSIMLILITTVGILVLI), 125–145 (FAYMSFSNISMLGLVTSSNLI), 147–167 (IHIFWELVGVCSYLLIGFWFT), 185–205 (GDFGLLLGILGFYWITGSFEF), 224–244 (LFVILCASLLFVGAVAKSAQF), 258–278 (TPISALIHAATMVAAGIFLVA), 283–303 (LFTVIPYIMNIISLIGIITIL), 327–347 (LGYIMLALGMGSYRAALFHLI), 354–374 (ALLFLGSGSIIHSMESIVGYS), 396–416 (TAFFLGTLSLCGIPPLACFWS), 425–445 (WLYSPIFAIIACSTAGLTAFY), 546–566 (LFPLLVLVLFTFFVGSIGIPF), 605–625 (IFSVSIAYFGIFISSFLYRPI), and 718–738 (ISSYLFLYLFSVSIFFLIFQV).

This sequence belongs to the complex I subunit 5 family. As to quaternary structure, NDH is composed of at least 16 different subunits, 5 of which are encoded in the nucleus.

The protein localises to the plastid. It is found in the chloroplast thylakoid membrane. The enzyme catalyses a plastoquinone + NADH + (n+1) H(+)(in) = a plastoquinol + NAD(+) + n H(+)(out). It catalyses the reaction a plastoquinone + NADPH + (n+1) H(+)(in) = a plastoquinol + NADP(+) + n H(+)(out). Functionally, NDH shuttles electrons from NAD(P)H:plastoquinone, via FMN and iron-sulfur (Fe-S) centers, to quinones in the photosynthetic chain and possibly in a chloroplast respiratory chain. The immediate electron acceptor for the enzyme in this species is believed to be plastoquinone. Couples the redox reaction to proton translocation, and thus conserves the redox energy in a proton gradient. This Buxus microphylla (Littleleaf boxwood) protein is NAD(P)H-quinone oxidoreductase subunit 5, chloroplastic (ndhF).